The primary structure comprises 238 residues: Tetrahydromethanopterin S-methyltransferase subunit A 1 (238 aa).

Residues 2–218 (VEKKSPAEGW…RMFAGMYSGK (217 aa)) lie on the Cytoplasmic side of the membrane. Histidine 84 is a 5-hydroxybenzimidazolylcob(I)amide binding site. Residues 219–237 (VQGIMIGLAFTLTLGILLL) traverse the membrane as a helical segment. Position 238 (valine 238) is a topological domain, extracellular.

It belongs to the MtrA family. The complex is composed of 8 subunits; MtrA, MtrB, MtrC, MtrD, MtrE, MtrF, MtrG and MtrH. 5-hydroxybenzimidazolylcob(I)amide serves as cofactor.

The protein localises to the cell membrane. The catalysed reaction is 5-methyl-5,6,7,8-tetrahydromethanopterin + coenzyme M + 2 Na(+)(in) = 5,6,7,8-tetrahydromethanopterin + methyl-coenzyme M + 2 Na(+)(out). Its pathway is one-carbon metabolism; methanogenesis from CO(2); methyl-coenzyme M from 5,10-methylene-5,6,7,8-tetrahydromethanopterin: step 2/2. Functionally, part of a complex that catalyzes the formation of methyl-coenzyme M and tetrahydromethanopterin from coenzyme M and methyl-tetrahydromethanopterin. This is an energy-conserving, sodium-ion translocating step. The sequence is that of Tetrahydromethanopterin S-methyltransferase subunit A 1 from Methanothermobacter thermautotrophicus (strain ATCC 29096 / DSM 1053 / JCM 10044 / NBRC 100330 / Delta H) (Methanobacterium thermoautotrophicum).